The following is a 283-amino-acid chain: Pantothenate synthetase (283 aa).

An ATP-binding site is contributed by 26-33 (MGNLHEGH). H33 functions as the Proton donor in the catalytic mechanism. Q57 contacts (R)-pantoate. A beta-alanine-binding site is contributed by Q57. 144 to 147 (GKKD) provides a ligand contact to ATP. Q150 contacts (R)-pantoate. Residues V173 and 181 to 184 (LSSR) each bind ATP.

Belongs to the pantothenate synthetase family. Homodimer.

The protein localises to the cytoplasm. The enzyme catalyses (R)-pantoate + beta-alanine + ATP = (R)-pantothenate + AMP + diphosphate + H(+). It participates in cofactor biosynthesis; (R)-pantothenate biosynthesis; (R)-pantothenate from (R)-pantoate and beta-alanine: step 1/1. Functionally, catalyzes the condensation of pantoate with beta-alanine in an ATP-dependent reaction via a pantoyl-adenylate intermediate. The chain is Pantothenate synthetase from Ralstonia nicotianae (strain ATCC BAA-1114 / GMI1000) (Ralstonia solanacearum).